Consider the following 549-residue polypeptide: Cation/acetate symporter ActP (549 aa).

13 helical membrane passes run 33 to 53, 77 to 97, 103 to 123, 148 to 168, 183 to 203, 206 to 226, 262 to 282, 303 to 323, 355 to 375, 404 to 424, 428 to 448, 464 to 484, and 493 to 513; these read WQAI…TYWA, LAIA…ALVF, GLIY…LIAE, ILSA…QMVG, IAVV…GMLA, WVQI…AFMV, ISAL…PHIL, GFMG…IMLV, LFLG…VAGL, VSKI…ILFE, IAFM…PIIL, GGWL…TIWV, and IFPY…GIWF.

It belongs to the sodium:solute symporter (SSF) (TC 2.A.21) family.

Its subcellular location is the cell inner membrane. In terms of biological role, transports acetate. The chain is Cation/acetate symporter ActP from Salmonella newport (strain SL254).